Reading from the N-terminus, the 1388-residue chain is Peroxisomal ATPase PEX6 (1388 aa).

Disordered regions lie at residues 1 to 29 (MTTSELVPPPPARRSPRTRRRRQDKPALS), 169 to 192 (EGTFFRDRPNKGKGKAPAQPDTPE), 262 to 287 (RGQSAPAIPPNRSLNGVPEDDEDDTA), 302 to 323 (DAATTEMDTVTETEESDLSGVD), and 346 to 365 (TTASGVSTMQPGTPMTIGRG). Basic residues predominate over residues 14-23 (RSPRTRRRRQ). Residues 169 to 178 (EGTFFRDRPN) show a composition bias toward basic and acidic residues. The span at 310-323 (TVTETEESDLSGVD) shows a compositional bias: acidic residues. Residues 346 to 358 (TTASGVSTMQPGT) are compositionally biased toward polar residues. ATP is bound at residue 1034-1041 (GPPGTGKT). The tract at residues 1297–1388 (GPPEKDRQQQ…GTASDDEGLY (92 aa)) is disordered. Positions 1319–1332 (VSGSSVVSKGKGKA) are enriched in low complexity.

The protein belongs to the AAA ATPase family. In terms of assembly, interacts with PEX1; forming the PEX1-PEX6 AAA ATPase complex, which is composed of a heterohexamer formed by a trimer of PEX1-PEX6 dimers.

It localises to the cytoplasm. Its subcellular location is the cytosol. The protein resides in the peroxisome membrane. The enzyme catalyses ATP + H2O = ADP + phosphate + H(+). Its function is as follows. Component of the PEX1-PEX6 AAA ATPase complex, a protein dislocase complex that mediates the ATP-dependent extraction of the PEX5 receptor from peroxisomal membranes, an essential step for PEX5 recycling. Specifically recognizes PEX5 monoubiquitinated at 'Cys-6', and pulls it out of the peroxisome lumen through the PEX2-PEX10-PEX12 retrotranslocation channel. Extraction by the PEX1-PEX6 AAA ATPase complex is accompanied by unfolding of the TPR repeats and release of bound cargo from PEX5. This chain is Peroxisomal ATPase PEX6 (PEX6), found in Colletotrichum orbiculare (strain 104-T / ATCC 96160 / CBS 514.97 / LARS 414 / MAFF 240422) (Cucumber anthracnose fungus).